The primary structure comprises 152 residues: Large ribosomal subunit protein bL9 (152 aa).

This sequence belongs to the bacterial ribosomal protein bL9 family.

Its function is as follows. Binds to the 23S rRNA. The polypeptide is Large ribosomal subunit protein bL9 (Corynebacterium urealyticum (strain ATCC 43042 / DSM 7109)).